The sequence spans 140 residues: MSLEIPPEWKKFRYRGKSLDELLNMPMDEFIKLLPSRQRRSLKKGFSDKQRRLLEKIRKYVREGKYSKTIKTHVRDMIILPEMVGLKFAVYNGKEFVEFQVVPEMIGHYLGEFSITTKKVEHGEPGLKATRSSLFLAMKG.

This sequence belongs to the universal ribosomal protein uS19 family.

In terms of biological role, protein S19 forms a complex with S13 that binds strongly to the 16S ribosomal RNA. This is Small ribosomal subunit protein uS19 (rps19) from Sulfurisphaera tokodaii (strain DSM 16993 / JCM 10545 / NBRC 100140 / 7) (Sulfolobus tokodaii).